The following is a 349-amino-acid chain: Holliday junction branch migration complex subunit RuvB (349 aa).

Positions 1 to 183 (MTDPSRLVTP…FGIPIRLNFY (183 aa)) are large ATPase domain (RuvB-L). ATP contacts are provided by residues Leu22, Arg23, Gly64, Lys67, Thr68, Thr69, 130–132 (EDF), Arg173, Tyr183, and Arg220. Residue Thr68 participates in Mg(2+) binding. The small ATPAse domain (RuvB-S) stretch occupies residues 184-254 (TIEELESIVT…IADHALGALE (71 aa)). The tract at residues 257-349 (SAGLDAMDRR…GLFGDTGDQE (93 aa)) is head domain (RuvB-H). Residues Arg293, Arg312, and Arg317 each coordinate DNA.

The protein belongs to the RuvB family. In terms of assembly, homohexamer. Forms an RuvA(8)-RuvB(12)-Holliday junction (HJ) complex. HJ DNA is sandwiched between 2 RuvA tetramers; dsDNA enters through RuvA and exits via RuvB. An RuvB hexamer assembles on each DNA strand where it exits the tetramer. Each RuvB hexamer is contacted by two RuvA subunits (via domain III) on 2 adjacent RuvB subunits; this complex drives branch migration. In the full resolvosome a probable DNA-RuvA(4)-RuvB(12)-RuvC(2) complex forms which resolves the HJ.

It is found in the cytoplasm. It catalyses the reaction ATP + H2O = ADP + phosphate + H(+). The RuvA-RuvB-RuvC complex processes Holliday junction (HJ) DNA during genetic recombination and DNA repair, while the RuvA-RuvB complex plays an important role in the rescue of blocked DNA replication forks via replication fork reversal (RFR). RuvA specifically binds to HJ cruciform DNA, conferring on it an open structure. The RuvB hexamer acts as an ATP-dependent pump, pulling dsDNA into and through the RuvAB complex. RuvB forms 2 homohexamers on either side of HJ DNA bound by 1 or 2 RuvA tetramers; 4 subunits per hexamer contact DNA at a time. Coordinated motions by a converter formed by DNA-disengaged RuvB subunits stimulates ATP hydrolysis and nucleotide exchange. Immobilization of the converter enables RuvB to convert the ATP-contained energy into a lever motion, pulling 2 nucleotides of DNA out of the RuvA tetramer per ATP hydrolyzed, thus driving DNA branch migration. The RuvB motors rotate together with the DNA substrate, which together with the progressing nucleotide cycle form the mechanistic basis for DNA recombination by continuous HJ branch migration. Branch migration allows RuvC to scan DNA until it finds its consensus sequence, where it cleaves and resolves cruciform DNA. The polypeptide is Holliday junction branch migration complex subunit RuvB (Rhodopseudomonas palustris (strain TIE-1)).